We begin with the raw amino-acid sequence, 20 residues long: Conotoxin PnMLKM-D0211 (20 aa).

The propeptide occupies 1-3 (VKR). Disulfide bonds link Cys4–Cys18, Cys5–Cys14, and Cys10–Cys17. The residue at position 16 (Pro16) is a 4-hydroxyproline. Trp19 is modified (tryptophan amide).

The protein belongs to the conotoxin M superfamily. As to expression, expressed by the venom duct.

It localises to the secreted. The chain is Conotoxin PnMLKM-D0211 from Conus pennaceus (Feathered cone).